We begin with the raw amino-acid sequence, 368 residues long: MEIIIVGAGIAGLSAGSGMVALRKGSIIDGTNMQVLIPDYYKDSESKWGLPMYAVHRVDLHTQLRLLATQKEGPGQPCDVQVRSKVVSYDAEGAKVTTENGEVLRADLIIAADGVHSTAVKQVLGDEVVQAGDTGWACMRWLVPSDDFLSDPQTAHMIQDSTTRYFTAAGGAAALVWYPCRNNEVQNFLYLSNFRARVEPSVPLEYAKKHFATALQTVVKKANQVKFWKLVARGPIPKWHKDRLVLIGDAAHPMLTFQGQGGGQAIEDGAALGILLDNVHDRGEIEERLQLFEQIRRNRGSALQILSNTNPPVPQSVRDAAAEYLPGHRLSSTDDVNEYVFSFDVLAESKAALAILQSKERITKSGFL.

Residue Ala-11 participates in FAD binding. Active-site residues include Arg-140 and Tyr-178. Asp-249 and Gly-262 together coordinate FAD.

This sequence belongs to the paxM FAD-dependent monooxygenase family. Monomer. FAD serves as cofactor.

FAD-dependent monooxygenase; part of the gene cluster that mediates the biosynthesis of the phomopsins, a group of hexapeptide mycotoxins which infects lupins and causes lupinosis disease in livestock. The role of phomE within the phomopsins biosynthesis pathway has still to be determined. The pathway starts with the processing of the precursor phomA by several endopeptidases including kexin proteases as well as the cluster-specific S41 family peptidase phomP1 and the oligopeptidase phomG to produce 10 identical copies of the hexapeptide Tyr-Val-Ile-Pro-Ile-Asp. After being excised from the precursor peptide, the core peptides are cyclized and modified post-translationally by enzymes encoded within the gene cluster. The timing and order of proteolysis of the phomA precursor and PTMs are still unknown. Two tyrosinase-like enzymes, phomQ1 and phomQ2, catalyze the chlorination and hydroxylation of Tyr, respectively. PhomYb, is proposed to be involved in the construction of the macrocyclic structure. The other 4 ustYa family proteins may be involved in PTMs that generate the unique structure of phomopsin A. PhomYa is required for the hydroxylation of C-beta of Tyr. PhomYc, phomYd, and phomYe are responsible for the biosynthesis of 2,3-dehydroisoleucine (dIle), 2,3-dehydroaspartic acid (dAsp), and 3,4-dehydroproline (dPro), respectively. While dIle formation by phomYc is indispensable for the installation of dAsp by phomYd, the order of the other PTMs have not been elucidated yet. Most of the biosynthetic enzymes likely have broad substrate specificity, and thus, there might be a metabolic grid from a precursor to phomopsin A. The enzyme(s) responsible for the biosynthesis of 3,4-dehydrovaline (dVal) have also not been identified yet. Finally, phomM acts as an S-adenosylmethionine-dependent alpha-N-methyltransferase that catalyzes two successive N-methylation reactions, converting N-desmethyl-phomopsin A to phomopsin A and phomopsin A further to an N,N-dimethylated congener called phomopsin E. The polypeptide is FAD-dependent monooxygenase phomE (Diaporthe leptostromiformis (Lupinosis disease fungus)).